We begin with the raw amino-acid sequence, 166 residues long: Specificity protein transcription factor 2 (166 aa).

Positions 17–45 are disordered; that stretch reads SYHHSLPSISPPDSPASTSASSSSSSIGA. Over residues 31–42 the composition is skewed to low complexity; sequence PASTSASSSSSS. 3 C2H2-type zinc fingers span residues 77–101, 107–131, and 137–160; these read HLCS…LRKH, FVCD…KRTH, and FACK…TSVH.

This sequence belongs to the Sp1 C2H2-type zinc-finger protein family.

Its function is as follows. Transcription factor. Probably acts downstream of the Wnt signaling pathway. This is Specificity protein transcription factor 2 from Caenorhabditis elegans.